The sequence spans 601 residues: Bifunctional ribose 1,5-bisphosphokinase-thymidine phosphorylase (601 aa).

The segment at 1-177 (MKATGTFFFV…EAGTARFVEA (177 aa)) is ribose 1,5-bisphosphokinase. A thymidinephosphorylase region spans residues 178-601 (LRTGTRTSAA…CCQAVRIDPD (424 aa)).

In the N-terminal section; belongs to the ribose 1,5-bisphosphokinase family. It in the C-terminal section; belongs to the thymidine/pyrimidine-nucleoside phosphorylase family. Type 2 subfamily.

The enzyme catalyses alpha-D-ribose 1,5-bisphosphate + ATP = 5-phospho-alpha-D-ribose 1-diphosphate + ADP. It catalyses the reaction thymidine + phosphate = 2-deoxy-alpha-D-ribose 1-phosphate + thymine. The protein operates within metabolic intermediate biosynthesis; 5-phospho-alpha-D-ribose 1-diphosphate biosynthesis; 5-phospho-alpha-D-ribose 1-diphosphate from D-ribose 5-phosphate (route II): step 3/3. Functionally, catalyzes the phosphorylation of ribose 1,5-bisphosphate to 5-phospho-D-ribosyl alpha-1-diphosphate (PRPP). The polypeptide is Bifunctional ribose 1,5-bisphosphokinase-thymidine phosphorylase (phnN) (Cupriavidus necator (strain ATCC 17699 / DSM 428 / KCTC 22496 / NCIMB 10442 / H16 / Stanier 337) (Ralstonia eutropha)).